A 569-amino-acid chain; its full sequence is Paxillin-B (569 aa).

Positions 10–18 (DLDLLLADL) match the LD motif 1 motif. Polar residues predominate over residues 62–78 (QPQTVQTISTPAPKNHN). The tract at residues 62–103 (QPQTVQTISTPAPKNHNTTTTTASFSVSSQPAPQPPQQSQQI) is disordered. The segment covering 79–102 (TTTTTASFSVSSQPAPQPPQQSQQ) has biased composition (low complexity). An LD motif 2 motif is present at residues 106-112 (LDDLDEL). A disordered region spans residues 129–311 (TTPEEHITHA…SPKVVHGDDL (183 aa)). The segment covering 150–161 (NTSSTNSASSLS) has biased composition (low complexity). Polar residues-rich tracts occupy residues 162–188 (RPNN…TTKK) and 196–206 (TLETTSGNNVY). The segment covering 207 to 217 (SSQPSQSQPQP) has biased composition (low complexity). The LD motif 3 motif lies at 232 to 239 (LDELLKGL). Positions 258 to 272 (HQHHHQHQHHHHHNP) are enriched in basic residues. Residues 273–301 (NHNQTQTVTTQINIGRTNTPNNNNNNNTN) are compositionally biased toward low complexity. Residues 311-318 (LDNLLNNL) carry the LD motif 4 motif. 4 consecutive LIM zinc-binding domains span residues 334-391 (GTCG…QELF), 393-452 (ARCA…TFAV), 453-510 (RCGG…QQAG), and 511-569 (SVCS…KLFA).

This sequence belongs to the paxillin family. In terms of tissue distribution, expressed in the upper and lower cup of the fruiting body.

It is found in the cytoplasm. Its subcellular location is the cell cortex. The protein resides in the cell projection. The protein localises to the filopodium. It localises to the cell junction. It is found in the focal adhesion. Its subcellular location is the cytoskeleton. In terms of biological role, required for cell-substrate adhesion, cell sorting, slug migration, and cell differentiation. May function upstream of limB. This Dictyostelium discoideum (Social amoeba) protein is Paxillin-B (paxB).